The following is a 128-amino-acid chain: Small ribosomal subunit protein uS13 (128 aa).

Positions 95–118 (GLPVRGQRTHTNARTRKGPKKGLV) are enriched in basic residues. A disordered region spans residues 95–128 (GLPVRGQRTHTNARTRKGPKKGLVRKAAAPAPKA).

It belongs to the universal ribosomal protein uS13 family. In terms of assembly, part of the 30S ribosomal subunit. Forms a loose heterodimer with protein S19. Forms two bridges to the 50S subunit in the 70S ribosome.

Its function is as follows. Located at the top of the head of the 30S subunit, it contacts several helices of the 16S rRNA. In the 70S ribosome it contacts the 23S rRNA (bridge B1a) and protein L5 of the 50S subunit (bridge B1b), connecting the 2 subunits; these bridges are implicated in subunit movement. Contacts the tRNAs in the A and P-sites. This chain is Small ribosomal subunit protein uS13, found in Anaeromyxobacter sp. (strain K).